Reading from the N-terminus, the 457-residue chain is ATP-dependent protease ATPase subunit HslU (457 aa).

Residues valine 21, 63–68, aspartate 269, glutamate 335, and arginine 407 contribute to the ATP site; that span reads GVGKTE.

The protein belongs to the ClpX chaperone family. HslU subfamily. As to quaternary structure, a double ring-shaped homohexamer of HslV is capped on each side by a ring-shaped HslU homohexamer. The assembly of the HslU/HslV complex is dependent on binding of ATP.

It is found in the cytoplasm. In terms of biological role, ATPase subunit of a proteasome-like degradation complex; this subunit has chaperone activity. The binding of ATP and its subsequent hydrolysis by HslU are essential for unfolding of protein substrates subsequently hydrolyzed by HslV. HslU recognizes the N-terminal part of its protein substrates and unfolds these before they are guided to HslV for hydrolysis. This chain is ATP-dependent protease ATPase subunit HslU, found in Desulfotalea psychrophila (strain LSv54 / DSM 12343).